The primary structure comprises 264 residues: Undecaprenyl-diphosphatase (264 aa).

The next 7 membrane-spanning stretches (helical) occupy residues 38–58 (RSDF…VLVF), 75–95 (REYV…GLVV), 106–126 (VSPV…VEAY), 136–156 (VTWT…VFPG), 181–201 (FVFL…FLEM), 217–237 (VAFL…MGYI), and 242–262 (FTAF…WLPS).

The protein belongs to the UppP family.

It is found in the cell membrane. The enzyme catalyses di-trans,octa-cis-undecaprenyl diphosphate + H2O = di-trans,octa-cis-undecaprenyl phosphate + phosphate + H(+). Catalyzes the dephosphorylation of undecaprenyl diphosphate (UPP). Confers resistance to bacitracin. This is Undecaprenyl-diphosphatase from Stenotrophomonas maltophilia (strain K279a).